Consider the following 337-residue polypeptide: Ornithine carbamoyltransferase (337 aa).

Residues 57 to 60 (STRT), Q84, R108, and 135 to 138 (HPTQ) each bind carbamoyl phosphate. L-ornithine-binding positions include N167, D231, and 235–236 (SM). Carbamoyl phosphate contacts are provided by residues 272-273 (CL) and R317.

It belongs to the aspartate/ornithine carbamoyltransferase superfamily. OTCase family.

It localises to the cytoplasm. It catalyses the reaction carbamoyl phosphate + L-ornithine = L-citrulline + phosphate + H(+). Its pathway is amino-acid degradation; L-arginine degradation via ADI pathway; carbamoyl phosphate from L-arginine: step 2/2. Reversibly catalyzes the transfer of the carbamoyl group from carbamoyl phosphate (CP) to the N(epsilon) atom of ornithine (ORN) to produce L-citrulline. In Streptococcus equi subsp. zooepidemicus (strain MGCS10565), this protein is Ornithine carbamoyltransferase.